The primary structure comprises 313 residues: Ribosomal RNA small subunit methyltransferase H (313 aa).

S-adenosyl-L-methionine contacts are provided by residues 35–37, aspartate 55, phenylalanine 79, aspartate 100, and glutamine 107; that span reads GGH.

This sequence belongs to the methyltransferase superfamily. RsmH family.

The protein localises to the cytoplasm. The catalysed reaction is cytidine(1402) in 16S rRNA + S-adenosyl-L-methionine = N(4)-methylcytidine(1402) in 16S rRNA + S-adenosyl-L-homocysteine + H(+). In terms of biological role, specifically methylates the N4 position of cytidine in position 1402 (C1402) of 16S rRNA. This Burkholderia thailandensis (strain ATCC 700388 / DSM 13276 / CCUG 48851 / CIP 106301 / E264) protein is Ribosomal RNA small subunit methyltransferase H.